The following is a 497-amino-acid chain: Lysine--tRNA ligase (497 aa).

2 residues coordinate Mg(2+): Glu409 and Glu416.

Belongs to the class-II aminoacyl-tRNA synthetase family. In terms of assembly, homodimer. The cofactor is Mg(2+).

It is found in the cytoplasm. The enzyme catalyses tRNA(Lys) + L-lysine + ATP = L-lysyl-tRNA(Lys) + AMP + diphosphate. This Streptococcus pyogenes serotype M6 (strain ATCC BAA-946 / MGAS10394) protein is Lysine--tRNA ligase.